The sequence spans 250 residues: Type III pantothenate kinase (250 aa).

An ATP-binding site is contributed by Asp6–Val13. Gly103 to Arg106 serves as a coordination point for substrate. Asp105 acts as the Proton acceptor in catalysis. K(+) is bound at residue Asp125. Thr128 contacts ATP. Thr180 is a substrate binding site.

It belongs to the type III pantothenate kinase family. Homodimer. Requires NH4(+) as cofactor. K(+) serves as cofactor.

The protein resides in the cytoplasm. The enzyme catalyses (R)-pantothenate + ATP = (R)-4'-phosphopantothenate + ADP + H(+). It functions in the pathway cofactor biosynthesis; coenzyme A biosynthesis; CoA from (R)-pantothenate: step 1/5. In terms of biological role, catalyzes the phosphorylation of pantothenate (Pan), the first step in CoA biosynthesis. This chain is Type III pantothenate kinase, found in Frankia alni (strain DSM 45986 / CECT 9034 / ACN14a).